The chain runs to 569 residues: Urease subunit alpha (569 aa).

The region spanning 132–569 (GGVDTHIHFI…VPLGQRYFLF (438 aa)) is the Urease domain. Ni(2+)-binding residues include H137, H139, and K220. Residue K220 is modified to N6-carboxylysine. H222 is a substrate binding site. Residues H249 and H275 each contribute to the Ni(2+) site. Residue H323 is the Proton donor of the active site. D363 is a binding site for Ni(2+).

This sequence belongs to the metallo-dependent hydrolases superfamily. Urease alpha subunit family. As to quaternary structure, heterotrimer of UreA (gamma), UreB (beta) and UreC (alpha) subunits. Three heterotrimers associate to form the active enzyme. Ni cation serves as cofactor. In terms of processing, carboxylation allows a single lysine to coordinate two nickel ions.

It is found in the cytoplasm. It carries out the reaction urea + 2 H2O + H(+) = hydrogencarbonate + 2 NH4(+). It participates in nitrogen metabolism; urea degradation; CO(2) and NH(3) from urea (urease route): step 1/1. This chain is Urease subunit alpha, found in Bacillus subtilis (strain 168).